We begin with the raw amino-acid sequence, 407 residues long: Serine/threonine transporter SstT (407 aa).

Helical transmembrane passes span 14-34, 48-68, 82-102, 141-161, 192-212, 218-238, 290-310, 316-336, and 363-383; these read GSLV…ATVS, FVGA…AASI, IVIL…LMSF, AVIT…GLAL, IGIF…AIAG, LVLL…IVFF, IPLG…ILTL, MGIQ…GVSA, and VAMQ…SAET.

Belongs to the dicarboxylate/amino acid:cation symporter (DAACS) (TC 2.A.23) family.

The protein localises to the cell inner membrane. The catalysed reaction is L-serine(in) + Na(+)(in) = L-serine(out) + Na(+)(out). It catalyses the reaction L-threonine(in) + Na(+)(in) = L-threonine(out) + Na(+)(out). In terms of biological role, involved in the import of serine and threonine into the cell, with the concomitant import of sodium (symport system). This chain is Serine/threonine transporter SstT, found in Shewanella pealeana (strain ATCC 700345 / ANG-SQ1).